We begin with the raw amino-acid sequence, 424 residues long: Histidine--tRNA ligase (424 aa).

The segment at 1–22 (MSYRRPKGTYDVYPGDAARQEP) is disordered.

It belongs to the class-II aminoacyl-tRNA synthetase family. In terms of assembly, homodimer.

It localises to the cytoplasm. The catalysed reaction is tRNA(His) + L-histidine + ATP = L-histidyl-tRNA(His) + AMP + diphosphate + H(+). The polypeptide is Histidine--tRNA ligase (Rubrobacter xylanophilus (strain DSM 9941 / JCM 11954 / NBRC 16129 / PRD-1)).